A 160-amino-acid polypeptide reads, in one-letter code: SsrA-binding protein (160 aa).

Residues 132–160 form a disordered region; that stretch reads KEFDKRDTVRERDSNRELQRTMRNKGKEE.

This sequence belongs to the SmpB family.

Its subcellular location is the cytoplasm. Functionally, required for rescue of stalled ribosomes mediated by trans-translation. Binds to transfer-messenger RNA (tmRNA), required for stable association of tmRNA with ribosomes. tmRNA and SmpB together mimic tRNA shape, replacing the anticodon stem-loop with SmpB. tmRNA is encoded by the ssrA gene; the 2 termini fold to resemble tRNA(Ala) and it encodes a 'tag peptide', a short internal open reading frame. During trans-translation Ala-aminoacylated tmRNA acts like a tRNA, entering the A-site of stalled ribosomes, displacing the stalled mRNA. The ribosome then switches to translate the ORF on the tmRNA; the nascent peptide is terminated with the 'tag peptide' encoded by the tmRNA and targeted for degradation. The ribosome is freed to recommence translation, which seems to be the essential function of trans-translation. The protein is SsrA-binding protein of Pseudomonas entomophila (strain L48).